Consider the following 113-residue polypeptide: Insulin (113 aa).

An N-terminal signal peptide occupies residues 1–24 (MAALWLQAFSLLVLMMVSWPGSQA). 3 disulfides stabilise this stretch: C32–C99, C44–C112, and C98–C103. A propeptide spans 56 to 90 (DVDPLLGFLPPKAGGAVVQGGENEVTFKDQMEMMV) (c peptide).

It belongs to the insulin family. In terms of assembly, heterodimer of a B chain and an A chain linked by two disulfide bonds.

It is found in the secreted. Functionally, insulin decreases blood glucose concentration. It increases cell permeability to monosaccharides, amino acids and fatty acids. It accelerates glycolysis, the pentose phosphate cycle, and glycogen synthesis in liver. The polypeptide is Insulin (ins) (Oreochromis niloticus (Nile tilapia)).